A 402-amino-acid polypeptide reads, in one-letter code: UDP-GlcNAc:betaGal beta-1,3-N-acetylglucosaminyltransferase 9 (402 aa).

Residues 1–10 (MRRRLRLRRD) are Cytoplasmic-facing. The helical; Signal-anchor for type II membrane protein transmembrane segment at 11 to 27 (ALLTLLLGASLGLLLYA) threads the bilayer. At 28–402 (QRDGAAPTAS…VAAGPFQWDS (375 aa)) the chain is on the lumenal side. Over residues 32–47 (AAPTASAPRGRGRAAP) the composition is skewed to low complexity. Residues 32–83 (AAPTASAPRGRGRAAPRPTPGPRAFQLPDAGAAPPAYEGDTPAPPTPTGPFD) are disordered.

The protein belongs to the glycosyltransferase 31 family.

Its subcellular location is the golgi apparatus membrane. The sequence is that of UDP-GlcNAc:betaGal beta-1,3-N-acetylglucosaminyltransferase 9 from Homo sapiens (Human).